A 1495-amino-acid polypeptide reads, in one-letter code: Terminal uridylyltransferase 7 (1495 aa).

Disordered regions lie at residues 1 to 30, 43 to 69, 89 to 140, and 162 to 205; these read MGDT…GHPQ, HGSK…RKGP, WMND…EDGY, and LETT…PVID. Basic and acidic residues predominate over residues 15–26; that stretch reads DRGTMDDDDFRR. Phosphothreonine occurs at positions 57 and 64. Basic and acidic residues-rich tracts occupy residues 92-118 and 128-140; these read DSHK…EFKP and QRKD…EDGY. 2 positions are modified to phosphoserine: serine 132 and serine 172. Positions 178 to 187 are enriched in basic residues; that stretch reads QRSRPRKPRK. The Matrin-type zinc-finger motif lies at 244–274; the sequence is YTCRLCDVLIESIAFAHKHIKEKRHKKNIKE. Residues 551–600 form the PAP-associated 1 domain; the sequence is VGQLWVELLRFYALEFNLADLVISIRVKELVSRELKDWPKKRIAIEDPYS. Serine 600 carries the post-translational modification Phosphoserine. The segment covering 734–756 has biased composition (basic and acidic residues); the sequence is DDYKGDKVYHPETGRKNEKEKVG. 2 disordered regions span residues 734-757 and 831-898; these read DDYK…KVGR and THSV…EDDE. A compositionally biased stretch (polar residues) spans 831-841; the sequence is THSVQGQTSEM. Composition is skewed to acidic residues over residues 843 to 859, 868 to 880, and 887 to 898; these read PSDE…EEEE, EDED…DELD, and GDEDALSEEDDE. A Phosphoserine modification is found at serine 844. Phosphoserine occurs at positions 893 and 939. The sufficient for monouridylation activity stretch occupies residues 951–1495; the sequence is SKLIFTKGKS…ASAKRTQQES (545 aa). The CCHC-type 1 zinc-finger motif lies at 963–980; that stretch reads VVCSLCKREGHLKKDCPE. UTP is bound by residues 1047–1050, 1057–1060, asparagine 1130, lysine 1152, 1170–1174, and histidine 1286; these read SSKN, SDLD, and SYAYT. 2 residues coordinate Mg(2+): aspartate 1058 and aspartate 1060. Residues 1233-1286 enclose the PAP-associated 2 domain; sequence SVGQLWLGLLRFYTEEFDFKEHVISIRRKSLLTTFKKQWTSKYIVIEDPFDLNH. The segment at 1345-1362 adopts a CCHC-type 2 zinc-finger fold; that stretch reads RCCRICGKIGHFMKDCPM. Disordered regions lie at residues 1367 to 1424 and 1466 to 1495; these read RRRR…MRAA and CPQF…QQES. A compositionally biased stretch (basic and acidic residues) spans 1381–1410; sequence PENKEKRSKEDKEIHNKYTEREVSTKEDKP. The CCHC-type 3 zinc finger occupies 1451–1468; that stretch reads KRCFICGREGHIKKECPQ. A compositionally biased stretch (polar residues) spans 1470-1485; the sequence is KGSSGSLSSKYMTQGK.

Belongs to the DNA polymerase type-B-like family. As to quaternary structure, interacts with MOV10; the interaction is RNA-dependent. Mg(2+) serves as cofactor. Requires Mn(2+) as cofactor.

It localises to the cytoplasm. It carries out the reaction RNA(n) + UTP = RNA(n)-3'-uridine ribonucleotide + diphosphate. Its function is as follows. Uridylyltransferase that mediates the terminal uridylation of mRNAs with short (less than 25 nucleotides) poly(A) tails, hence facilitating global mRNA decay. Essential for both oocyte maturation and fertility. Through 3' terminal uridylation of mRNA, sculpts, with TUT7, the maternal transcriptome by eliminating transcripts during oocyte growth. Involved in microRNA (miRNA)-induced gene silencing through uridylation of deadenylated miRNA targets. Also functions as an integral regulator of microRNA biogenesiS using 3 different uridylation mechanisms. Acts as a suppressor of miRNA biogenesis by mediating the terminal uridylation of some miRNA precursors, including that of let-7 (pre-let-7). Uridylated pre-let-7 RNA is not processed by Dicer and undergo degradation. Pre-let-7 uridylation is strongly enhanced in the presence of LIN28A. In the absence of LIN28A, TUT7 and TUT4 monouridylate group II pre-miRNAs, which includes most of pre-let7 members, that shapes an optimal 3' end overhang for efficient processing. Add oligo-U tails to truncated pre-miRNAS with a 5' overhang which may promote rapid degradation of non-functional pre-miRNA species. Does not play a role in replication-dependent histone mRNA degradation. Due to functional redundancy between TUT4 and TUT7, the identification of the specific role of each of these proteins is difficult. TUT4 and TUT7 restrict retrotransposition of long interspersed element-1 (LINE-1) in cooperation with MOV10 counteracting the RNA chaperonne activity of L1RE1. TUT7 uridylates LINE-1 mRNAs in the cytoplasm which inhibits initiation of reverse transcription once in the nucleus, whereas uridylation by TUT4 destabilizes mRNAs in cytoplasmic ribonucleoprotein granules. The chain is Terminal uridylyltransferase 7 from Homo sapiens (Human).